The sequence spans 584 residues: Endogenous retrovirus group FC1 Env polyprotein (584 aa).

The first 22 residues, 1–22 (MARPSPLCLLLLLTLLTPIVPS), serve as a signal peptide directing secretion. Residues 23-518 (NSLLTEPPFR…GWWQSPLTTW (496 aa)) are Extracellular-facing. 2 N-linked (GlcNAc...) asparagine glycosylation sites follow: asparagine 69 and asparagine 247. The CXXC signature appears at 251–254 (CFLC). Residues asparagine 272, asparagine 276, asparagine 308, asparagine 313, asparagine 322, asparagine 334, asparagine 342, and asparagine 346 are each glycosylated (N-linked (GlcNAc...) asparagine). Residues 384 to 404 (AVFPPLVIGVSLTSSLVASGL) form a fusion peptide region. Positions 449-465 (MQNRRALDLLTADKGGT) match the CKS-17 motif. Cysteine 466 and cysteine 473 are joined by a disulfide. A CX6CC motif is present at residues 466–474 (CMFLGEECC). N-linked (GlcNAc...) asparagine glycosylation is present at asparagine 478. The helical transmembrane segment at 519 to 539 (IIPFISPILIICLLLLIAPCV) threads the bilayer. Over 540–584 (LKFIKNRISEVSRVTVNQMLLHPYSRLPTSEDHYDDALTQQEAAR) the chain is Cytoplasmic.

This sequence belongs to the gamma type-C retroviral envelope protein family. HERV class-I F(c)1 env subfamily. The surface (SU) and transmembrane (TM) proteins form a heterodimer. SU and TM are attached by noncovalent interactions or by a labile interchain disulfide bond. Post-translationally, specific enzymatic cleavages in vivo yield the mature SU and TM proteins. The CXXC motif is highly conserved across a broad range of retroviral envelope proteins. It is thought to participate in the formation of a labile disulfide bond possibly with the CX6CC motif present in the transmembrane protein. As to expression, low expression in skin, testis and trachea.

The protein resides in the virion. It localises to the cell membrane. Functionally, retroviral envelope proteins mediate receptor recognition and membrane fusion during early infection. Endogenous envelope proteins may have kept, lost or modified their original function during evolution. This endogenous envelope protein has lost its original fusogenic properties. In terms of biological role, SU mediates receptor recognition. TM anchors the envelope heterodimer to the viral membrane through one transmembrane domain. The other hydrophobic domain, called fusion peptide, mediates fusion of the viral membrane with the target cell membrane. The sequence is that of Endogenous retrovirus group FC1 Env polyprotein (ERVFC1) from Homo sapiens (Human).